A 391-amino-acid polypeptide reads, in one-letter code: Histidinol-phosphate aminotransferase (391 aa).

At Lys246 the chain carries N6-(pyridoxal phosphate)lysine.

It belongs to the class-II pyridoxal-phosphate-dependent aminotransferase family. Histidinol-phosphate aminotransferase subfamily. It depends on pyridoxal 5'-phosphate as a cofactor.

It carries out the reaction L-histidinol phosphate + 2-oxoglutarate = 3-(imidazol-4-yl)-2-oxopropyl phosphate + L-glutamate. It participates in amino-acid biosynthesis; L-histidine biosynthesis; L-histidine from 5-phospho-alpha-D-ribose 1-diphosphate: step 7/9. In Methanopyrus kandleri (strain AV19 / DSM 6324 / JCM 9639 / NBRC 100938), this protein is Histidinol-phosphate aminotransferase.